A 275-amino-acid polypeptide reads, in one-letter code: MEMO1 family protein Nmar_0215 (275 aa).

Belongs to the MEMO1 family.

The chain is MEMO1 family protein Nmar_0215 from Nitrosopumilus maritimus (strain SCM1).